Consider the following 199-residue polypeptide: Putative pseudouridine methyltransferase (199 aa).

Residues leucine 132 and cysteine 186 each contribute to the S-adenosyl-L-methionine site.

It belongs to the methyltransferase superfamily. TrmY family.

It is found in the cytoplasm. This Vibrio parahaemolyticus serotype O3:K6 (strain RIMD 2210633) protein is Putative pseudouridine methyltransferase.